The sequence spans 626 residues: Chaperone protein HtpG (626 aa).

Residues 1 to 341 (MAKKEFKAES…SEDLSLNISR (341 aa)) form an a; substrate-binding region. The segment at 342–552 (EMLQHDRQLK…DGEVTIEMEK (211 aa)) is b. The c stretch occupies residues 553–626 (ILNAMPDSQN…FTNNICKVMV (74 aa)).

This sequence belongs to the heat shock protein 90 family. In terms of assembly, homodimer.

It is found in the cytoplasm. Molecular chaperone. Has ATPase activity. This is Chaperone protein HtpG from Bacillus subtilis (strain 168).